The sequence spans 502 residues: MRIFIAFEGSFEPFDVSADETVEVVKLMIKDYFHIPLSEDKQGRRYLELMYAGAALKDSWSLADVGISFCSTLKCFVKEEDKPTLYVFNAVTQDTMPVMESISLLDKTVSDLRTLVTLRCGLPVSVYCLRTPRGLEMYDCNTLKDYQTDIGTTLRLDVWDGWKEFLMGCLLGQKLKVQRYLSKEGPVLKYQKRVALYIAAFCGYIELTEWALKQGARPHEAVGVHPYRAWCHEALHADVSKCPIHAAAEAGQLLILKAFVNYSVLCLECKNAAGQTPLTIVFKHKHKDCVLYLLSKMWSTVSFPKISVPMRIYIKIKQWILRAQSHSLHKSQFCGARVFGAKVGDTVMVDGFTKPKMTSKSWHKAGNSDSQSIVLKLPSLSKQTASSKPVNPLAISQPDTRKQALKFHPLVNASSFSELQKHQQQNQKKITATARKKEKLIKNTYLPQVPLPPVSRVGYSHPSFFYATPSADFLLKSSFSSFLEHSGKTPWENAIYCLAVAR.

The chain is Protein ANKUB1 (ANKUB1) from Homo sapiens (Human).